We begin with the raw amino-acid sequence, 147 residues long: 3-dehydroquinate dehydratase (147 aa).

The active-site Proton acceptor is the tyrosine 22. Substrate contacts are provided by asparagine 74, histidine 80, and aspartate 87. Histidine 101 serves as the catalytic Proton donor. Residues 102-103 (IS) and arginine 112 each bind substrate.

Belongs to the type-II 3-dehydroquinase family. As to quaternary structure, homododecamer.

The catalysed reaction is 3-dehydroquinate = 3-dehydroshikimate + H2O. It functions in the pathway metabolic intermediate biosynthesis; chorismate biosynthesis; chorismate from D-erythrose 4-phosphate and phosphoenolpyruvate: step 3/7. Catalyzes a trans-dehydration via an enolate intermediate. This is 3-dehydroquinate dehydratase from Lachnospira eligens (strain ATCC 27750 / DSM 3376 / VPI C15-48 / C15-B4) (Eubacterium eligens).